The chain runs to 84 residues: Small ribosomal subunit protein uS17 (84 aa).

Belongs to the universal ribosomal protein uS17 family. As to quaternary structure, part of the 30S ribosomal subunit.

One of the primary rRNA binding proteins, it binds specifically to the 5'-end of 16S ribosomal RNA. The chain is Small ribosomal subunit protein uS17 from Borrelia hermsii (strain HS1 / DAH).